We begin with the raw amino-acid sequence, 433 residues long: MSYSTRSISQSARFGVLASPGVNRARSVAGGASTVRMSSANVTSSAFGGSSAFAGSSAFAGSPAFNVSVTSNNGKETMQNLNDRLANYLDRVRSLEQANHELELKIREYLDKKAAVGSLDYSGYYNTINLLRSQINDATIDNTRLVLSIDNAKLAADDFKIKYESEMAIRTGAESDIVGLRRVLDELTLNKTDLELEIESLKEELIYLKKNHEEELAVVRSSARGNVDVQVDSAPPVDLAQIMADVRSQYESMMEKNRQELEACYKGQSENLNHEVATNTAALQTSKTAITDLKRTIQSLEIELQSLLSMKGALEGTLAETEAQYGAQLNHLQAMITQVEMELQNLRSDADHQSLEYKRLLDAKTRLEMEIATYRRLLEGEDTRFSQTETQKAVTIVSKEQSSSSIKKVKTVIEEVVDGKVVSSRVEELTETS.

The head stretch occupies residues 1–73 (MSYSTRSISQ…AFNVSVTSNN (73 aa)). A coil 1A region spans residues 74–109 (GKETMQNLNDRLANYLDRVRSLEQANHELELKIREY). Positions 74-385 (GKETMQNLND…RLLEGEDTRF (312 aa)) constitute an IF rod domain. The linker 1 stretch occupies residues 110-127 (LDKKAAVGSLDYSGYYNT). A coil 1B region spans residues 128-219 (INLLRSQIND…KNHEEELAVV (92 aa)). A linker 12 region spans residues 220-242 (RSSARGNVDVQVDSAPPVDLAQI). Positions 243–381 (MADVRSQYES…ATYRRLLEGE (139 aa)) are coil 2. The interval 382-433 (DTRFSQTETQKAVTIVSKEQSSSSIKKVKTVIEEVVDGKVVSSRVEELTETS) is tail.

Belongs to the intermediate filament family. As to quaternary structure, heterotetramer of two type I and two type II keratins.

The polypeptide is Keratin, type I cytoskeletal 47 kDa (xk70a) (Xenopus laevis (African clawed frog)).